The following is a 220-amino-acid chain: Translation initiation factor 6 (220 aa).

Belongs to the eIF-6 family.

Binds to the 50S ribosomal subunit and prevents its association with the 30S ribosomal subunit to form the 70S initiation complex. In Methanoculleus marisnigri (strain ATCC 35101 / DSM 1498 / JR1), this protein is Translation initiation factor 6.